The sequence spans 676 residues: Pre-mRNA-splicing factor clf1 (676 aa).

14 HAT repeats span residues 52 to 84 (EYQGRKRKEFEDYVRRNRLNMNNWMRYASWELE), 86 to 118 (KEFRRARSIFERALDVNPTSVVLWIRYIESEMR), 120 to 152 (RNINHARNLLDRAVTILPRVDKFWYKYVYMEET), 154 to 185 (GNIQGTRQVFERWMSWEPDEGAWSAYIKLEKR), 187 to 218 (NEFERARAIFQRFTIVHPEPRNWIKWARFEEE), 220 to 255 (GTSDLVREVYGMAIETLGEDFMDEKLFIAYAKFEAK), 257 to 291 (KEYERARAIYKYALDRLPRSKAMALHKAYTTFEKQ), 301 to 333 (VILSKRRVQYEEQLKENPRNYDVWFDFARLEET), 335 to 369 (GDPDRVRDIYERAIAQIPPSQEKRHWRRYIYLWIF), 379 to 415 (KDVDRARQIYTECLKLIPHKKFTFAKIWLLKAQFDIR), 417 to 448 (MDLQAARKTLGQAIGMCPKDKLFRGYIDLERQ), 450 to 482 (FEFVRCRTLYEKQIEWNPANSQSWIKYAELERG), 484 to 518 (DDSERARAIFELGIDQPMLDMPELVWKAYIDFEEY), and 520 to 551 (GEYDRVRQLYERLLQKTDHVKVWINYARFEIN). Over residues 554-566 (EEEEEEEEEEEEE) the composition is skewed to acidic residues. Positions 554 to 573 (EEEEEEEEEEEEERPVSDEA) are disordered. The stretch at 572–610 (EAKRRARAVFERAHKVFKEKEMKEERVELLNAWRAFEHT) is one HAT 15 repeat.

Belongs to the crooked-neck family. As to quaternary structure, associated with the spliceosome.

Its subcellular location is the nucleus. Its function is as follows. Involved in pre-mRNA splicing and cell cycle progression. Required for the spliceosome assembly and initiation of the DNA replication. The polypeptide is Pre-mRNA-splicing factor clf1 (clf1) (Aspergillus fumigatus (strain ATCC MYA-4609 / CBS 101355 / FGSC A1100 / Af293) (Neosartorya fumigata)).